The primary structure comprises 265 residues: Tryptophan synthase alpha chain (265 aa).

Residues Glu49 and Asp60 each act as proton acceptor in the active site.

The protein belongs to the TrpA family. As to quaternary structure, tetramer of two alpha and two beta chains.

It carries out the reaction (1S,2R)-1-C-(indol-3-yl)glycerol 3-phosphate + L-serine = D-glyceraldehyde 3-phosphate + L-tryptophan + H2O. It functions in the pathway amino-acid biosynthesis; L-tryptophan biosynthesis; L-tryptophan from chorismate: step 5/5. Its function is as follows. The alpha subunit is responsible for the aldol cleavage of indoleglycerol phosphate to indole and glyceraldehyde 3-phosphate. The chain is Tryptophan synthase alpha chain from Desulfosudis oleivorans (strain DSM 6200 / JCM 39069 / Hxd3) (Desulfococcus oleovorans).